The following is a 411-amino-acid chain: Heparan-sulfate 6-O-sulfotransferase 1 (411 aa).

Over 11 to 17 the chain is Cytoplasmic; it reads MVERASK. Residues 18–37 form a helical; Signal-anchor for type II membrane protein membrane-spanning segment; sequence FVLVVAGSVCFMLILYQYAG. Topologically, residues 38-411 are lumenal; it reads PGLSLGAPGG…DYMSHIIEKW (374 aa). 93–101 provides a ligand contact to 3'-phosphoadenylyl sulfate; that stretch reads HIQKTGGTT. Substrate is bound by residues 123-124, Arg-140, Trp-145, and His-150; that span reads KK. The Proton acceptor role is filled by His-150. 3'-phosphoadenylyl sulfate contacts are provided by Arg-185 and Ser-193. Substrate contacts are provided by His-197 and Trp-204. N-linked (GlcNAc...) asparagine glycosylation is present at Asn-264. 317 to 319 contributes to the 3'-phosphoadenylyl sulfate binding site; it reads MQY. Asn-320 is a glycosylation site (N-linked (GlcNAc...) asparagine). 3'-phosphoadenylyl sulfate is bound at residue 323 to 324; it reads RA. Residues 352 to 387 adopt a coiled-coil conformation; the sequence is KDLFQQRYQYKRQLERREQRLRSREERLLHRAKEAL.

The protein belongs to the sulfotransferase 6 family. Post-translationally, N-glycosylated. Expressed in fetal brain.

The protein localises to the membrane. It catalyses the reaction alpha-D-glucosaminyl-[heparan sulfate](n) + 3'-phosphoadenylyl sulfate = 6-sulfo-alpha-D-glucosaminyl-[heparan sulfate](n) + adenosine 3',5'-bisphosphate + H(+). Functionally, 6-O-sulfation enzyme which catalyzes the transfer of sulfate from 3'-phosphoadenosine 5'-phosphosulfate (PAPS) to position 6 of the N-sulfoglucosamine residue (GlcNS) of heparan sulfate. Critical for normal neuronal development where it may play a role in neuron branching. May also play a role in limb development. May prefer iduronic acid. This Homo sapiens (Human) protein is Heparan-sulfate 6-O-sulfotransferase 1.